Reading from the N-terminus, the 453-residue chain is UDP-glycosyltransferase 76E9 (453 aa).

UDP-alpha-D-glucose contacts are provided by residues Ser279, 337–339 (APQ), 354–362 (HCGWNSTLE), and 376–379 (TTDQ).

This sequence belongs to the UDP-glycosyltransferase family.

In Arabidopsis thaliana (Mouse-ear cress), this protein is UDP-glycosyltransferase 76E9 (UGT76E9).